The sequence spans 562 residues: Zinc finger protein 579 (562 aa).

The span at 1-11 (MDPQPPPPAQG) shows a compositional bias: pro residues. The segment at 1-45 (MDPQPPPPAQGSPPHRDRGRGRGRGRGRGRGRGRGRGGAGAPRAP) is disordered. Residues 17–35 (DRGRGRGRGRGRGRGRGRG) are compositionally biased toward basic residues. 3 C2H2-type zinc fingers span residues 46–68 (LPCP…RLSH), 74–96 (HACP…LRGH), and 102–125 (LRCA…AQEH). Omega-N-methylarginine is present on R94. Disordered stretches follow at residues 120 to 154 (HLAQ…EGVE) and 166 to 199 (EEAT…AEAG). The span at 187-197 (DPRESEAKEAE) shows a compositional bias: basic and acidic residues. At S191 the chain carries Phosphoserine. 2 C2H2-type zinc fingers span residues 267–289 (HQCS…RLVH) and 295–317 (FVCP…RRVH). The tract at residues 321–377 (SLLAPLPGAGKKDDKASGGRNSGKGPEGGEGAECGGASEGGEGGHNGGDATPARPPA) is disordered. Positions 340-367 (RNSGKGPEGGEGAECGGASEGGEGGHNG) are enriched in gly residues. 3 C2H2-type zinc fingers span residues 382–404 (FWCP…GVTH), 410–432 (FQCV…AQVH), and 439–461 (HPCP…QRCH). S486 is modified (phosphoserine). The segment at 505–530 (AHIKEEPPSPGTPPQSPPAPPVFLSA) is disordered. Residues 512–525 (PSPGTPPQSPPAPP) are compositionally biased toward pro residues.

The protein belongs to the krueppel C2H2-type zinc-finger protein family.

It is found in the nucleus. Its function is as follows. May be involved in transcriptional regulation. In Mus musculus (Mouse), this protein is Zinc finger protein 579 (Znf579).